A 236-amino-acid chain; its full sequence is Ubiquinone biosynthesis O-methyltransferase (236 aa).

Residues arginine 40, glycine 59, aspartate 80, and leucine 124 each contribute to the S-adenosyl-L-methionine site.

This sequence belongs to the methyltransferase superfamily. UbiG/COQ3 family.

The enzyme catalyses a 3-demethylubiquinol + S-adenosyl-L-methionine = a ubiquinol + S-adenosyl-L-homocysteine + H(+). The catalysed reaction is a 3-(all-trans-polyprenyl)benzene-1,2-diol + S-adenosyl-L-methionine = a 2-methoxy-6-(all-trans-polyprenyl)phenol + S-adenosyl-L-homocysteine + H(+). It participates in cofactor biosynthesis; ubiquinone biosynthesis. Functionally, O-methyltransferase that catalyzes the 2 O-methylation steps in the ubiquinone biosynthetic pathway. In Saccharophagus degradans (strain 2-40 / ATCC 43961 / DSM 17024), this protein is Ubiquinone biosynthesis O-methyltransferase.